We begin with the raw amino-acid sequence, 440 residues long: Transposon Ty1-DR1 Gag polyprotein (440 aa).

Composition is skewed to polar residues over residues 1 to 10, 48 to 60, and 127 to 152; these read MESQQLSNYP, TKAN…TPAS, and QSQF…GNTF. 3 disordered regions span residues 1–93, 126–173, and 352–440; these read MESQ…MMTQ, PQSQ…RPPP, and GSRN…PGTY. The segment covering 153-165 has biased composition (low complexity); the sequence is TDSSSADSDMTST. Residues 299-401 form an RNA-binding region; sequence NNGIHINNKV…NSKSKTARAH (103 aa). Low complexity predominate over residues 402–418; sequence NVSTSNNSPSTDNDSIS. Position 416 is a phosphoserine (Ser-416). Over residues 419–428 the composition is skewed to polar residues; that stretch reads KSTTEPIQLN. The span at 429–440 shows a compositional bias: basic and acidic residues; it reads NKHDLHLRPGTY.

As to quaternary structure, homotrimer.

It is found in the cytoplasm. Capsid protein (CA) is the structural component of the virus-like particle (VLP), forming the shell that encapsulates the retrotransposons dimeric RNA genome. The particles are assembled from trimer-clustered units and there are holes in the capsid shells that allow for the diffusion of macromolecules. CA also has nucleocapsid-like chaperone activity, promoting primer tRNA(i)-Met annealing to the multipartite primer-binding site (PBS), dimerization of Ty1 RNA and initiation of reverse transcription. This Saccharomyces cerevisiae (strain ATCC 204508 / S288c) (Baker's yeast) protein is Transposon Ty1-DR1 Gag polyprotein (TY1A-DR1).